A 105-amino-acid chain; its full sequence is UPF0145 protein Ping_0381 (105 aa).

It belongs to the UPF0145 family.

The polypeptide is UPF0145 protein Ping_0381 (Psychromonas ingrahamii (strain DSM 17664 / CCUG 51855 / 37)).